The primary structure comprises 780 residues: ATP-dependent 6-phosphofructokinase, muscle type (780 aa).

Thr-2 is subject to N-acetylthreonine. The tract at residues 2–390 (THEEHHAART…NWEVYKLLAH (389 aa)) is N-terminal catalytic PFK domain 1. Residues Gly-25, 88–89 (RC), and 118–121 (GDGS) contribute to the ATP site. Residue Asp-119 coordinates Mg(2+). Ser-133 carries the post-translational modification Phosphoserine. Substrate-binding positions include 164-166 (SID), Arg-201, 208-210 (MGR), Glu-264, Arg-292, and 298-301 (HVQR). Asp-166 serves as the catalytic Proton acceptor. A Phosphoserine modification is found at Ser-377. Residues 391-401 (IRPPAPKSGSY) form an interdomain linker region. Residues 402–780 (TVAVMNVGAP…SRKRSGEATV (379 aa)) form a C-terminal regulatory PFK domain 2 region. Residues Arg-471 and 528–532 (TVSNN) each bind beta-D-fructose 2,6-bisphosphate. A glycan (O-linked (GlcNAc) serine) is linked at Ser-530. Lys-557 is subject to N6-(2-hydroxyisobutyryl)lysine. Beta-D-fructose 2,6-bisphosphate contacts are provided by residues Arg-566, 573-575 (MGG), Glu-629, Arg-655, and 661-664 (HMQQ). Phosphoserine is present on Ser-667. Position 735 (Arg-735) interacts with beta-D-fructose 2,6-bisphosphate. Phosphoserine; by PKA is present on Ser-775.

This sequence belongs to the phosphofructokinase type A (PFKA) family. ATP-dependent PFK group I subfamily. Eukaryotic two domain clade 'E' sub-subfamily. Homo- and heterotetramers. Phosphofructokinase (PFK) enzyme functions as a tetramer composed of different combinations of 3 types of subunits, called PFKM (M), PFKL (L) and PFKP (P). The composition of the PFK tetramer differs according to the tissue type it is present in. The kinetic and regulatory properties of the tetrameric enzyme are dependent on the subunit composition, hence can vary across tissues. Interacts (via C-terminus) with HK1 (via N-terminal spermatogenic cell-specific region). Mg(2+) is required as a cofactor. Post-translationally, glcNAcylation decreases enzyme activity.

It localises to the cytoplasm. The enzyme catalyses beta-D-fructose 6-phosphate + ATP = beta-D-fructose 1,6-bisphosphate + ADP + H(+). It participates in carbohydrate degradation; glycolysis; D-glyceraldehyde 3-phosphate and glycerone phosphate from D-glucose: step 3/4. Its activity is regulated as follows. Allosterically activated by ADP, AMP, or fructose 2,6-bisphosphate, and allosterically inhibited by ATP or citrate. In terms of biological role, catalyzes the phosphorylation of D-fructose 6-phosphate to fructose 1,6-bisphosphate by ATP, the first committing step of glycolysis. The sequence is that of ATP-dependent 6-phosphofructokinase, muscle type (PFKM) from Oryctolagus cuniculus (Rabbit).